Consider the following 109-residue polypeptide: RNA-binding protein Hfq (109 aa).

The Sm domain occupies 9 to 68 (DPFLNALRKEKVSVSVYLVNGIKLQGQVEAFDQFCIVLRNTVNQMVYKHAISTIVPAKSV). Residues 77-109 (PYHQNSNDEQDENVDDIHSDDLEIQENEGNIHE) form a disordered region.

Belongs to the Hfq family. In terms of assembly, homohexamer.

RNA chaperone that binds small regulatory RNA (sRNAs) and mRNAs to facilitate mRNA translational regulation in response to envelope stress, environmental stress and changes in metabolite concentrations. Also binds with high specificity to tRNAs. In Francisella tularensis subsp. holarctica (strain FTNF002-00 / FTA), this protein is RNA-binding protein Hfq.